A 331-amino-acid chain; its full sequence is Serpentine receptor class alpha-9 (331 aa).

A run of 7 helical transmembrane segments spans residues 26 to 46, 58 to 78, 104 to 124, 142 to 162, 189 to 209, 238 to 258, and 275 to 295; these read IDLL…QLVL, LILE…IEAI, YLKV…GLMI, IIGF…GKLF, YFTV…LLKI, VCFL…GVGA, and LCVV…LLLI.

It belongs to the nematode receptor-like protein sra family.

The protein resides in the membrane. In Caenorhabditis elegans, this protein is Serpentine receptor class alpha-9 (sra-9).